A 436-amino-acid polypeptide reads, in one-letter code: Retinoic acid receptor RXR (436 aa).

The interval 1–108 (MDRSEGMDTL…GPSPSPGLPH (108 aa)) is disordered. A modulating region spans residues 1–116 (MDRSEGMDTL…PHSSLHTKHI (116 aa)). Residues 13–22 (SMPSGMSMGM) are compositionally biased toward low complexity. Composition is skewed to polar residues over residues 40 to 49 (SSLTSPTSTH) and 62 to 76 (MASS…QQMH). The segment covering 85–98 (SSMGSPPMLCLSPS) has biased composition (low complexity). 2 consecutive NR C4-type zinc fingers follow at residues 117 to 137 (CAIC…CEGC) and 153 to 172 (CRDD…CQYC). Residues 117 to 182 (CAICGDRASG…RYMKCLSMGM (66 aa)) constitute a DNA-binding region (nuclear receptor). The segment at 183 to 206 (KREAVQEERQRVKEKGDGEVESTS) is hinge. Positions 189–200 (EERQRVKEKGDG) are enriched in basic and acidic residues. The interval 189 to 209 (EERQRVKEKGDGEVESTSGAN) is disordered. The NR LBD domain occupies 209–432 (NNDMPVEQIL…TFLMEMLENP (224 aa)). Residues Arg-290 and Ala-301 each contribute to the 9-cis-retinoate site.

This sequence belongs to the nuclear hormone receptor family. NR2 subfamily. In terms of assembly, homodimer (via ligand-binding domain). Heterodimer. Homotetramer consisting of 2 canonical homodimers. Within the tetramer, each monomer binds one molecule of 9C-RA and a NCOA1-derived peptide containing an L-X(2)-L-L motif.

The protein localises to the nucleus. In terms of biological role, ligand-dependent transcription factor probably involved in the retinoic acid response pathway. Binds 9-cis-retinoic acid (9C-RA) and, to a lesser extent, docosahexaenoic acid (DHA), phytanic acid, methoprene acid and oleic acid. Binds to double-stranded DNA sequences containing direct repeats (DR) with the consensus sequence 5'-[AG]GGTCA-3' and 1, 2, 3, 4 or 5 nucleotides in between (DR1, DR2, DR3. DR4 and DR5, respectively). Binding to DR1 is strongest. Transactivates gene expression when 9C-RA or DHA is bound. This is Retinoic acid receptor RXR from Biomphalaria glabrata (Bloodfluke planorb).